Here is a 549-residue protein sequence, read N- to C-terminus: Movement protein Hsp70h (549 aa).

It belongs to the heat shock protein 70 family.

Its subcellular location is the virion. Its function is as follows. Transports viral genome to neighboring plant cells directly through plasmosdesmata, without any budding. The movement protein allows efficient cell to cell propagation, by bypassing the host cell wall barrier. Two movement proteins, p6, Hsp70h and three structural proteins, CP, CPm, and P64 are essential for cell-cell movement. Also plays a role in virion formation. Together with CPm and p64, encapsidates the 5'-terminal portion of the viral genome. This Vitis vinifera (Grape) protein is Movement protein Hsp70h.